The primary structure comprises 853 residues: EF-hand domain-containing family member B (853 aa).

2 disordered regions span residues 1–31 (MCSFVRVGSPKPLQTSASPLEMSSLRRTRAP) and 244–266 (AQQPEEKKEPGSTEPGVEPPGNI). EF-hand domains follow at residues 581–616 (QNFDTLQVAFRHYDKKGDGVIDRAELHEACVQANLH) and 617–652 (LDKMLLDHLFDYCDVDQDGLINYLEFANFLNWKDRI). Asp-594, Asp-598, Glu-605, Asp-630, Asp-632, Asp-634, and Glu-641 together coordinate Ca(2+).

In terms of assembly, microtubule inner protein component of sperm flagellar doublet microtubules. Interacts with STIM1 and ORAI1; the interactions take place upon Ca(2+)-store depletion and dissociate through a Ca(2+)-dependent mechanism. Interaction with STIM1 inhibits STIM1 interaction with SARAF.

The protein localises to the cytoplasm. Its subcellular location is the cytoskeleton. The protein resides in the cilium axoneme. It is found in the flagellum axoneme. In terms of biological role, microtubule inner protein (MIP) part of the dynein-decorated doublet microtubules (DMTs) in cilia axoneme, which is required for motile cilia beating. Cytosolic sensor for calcium, modulates the interaction of STIM1 and ORAI1 upon store depletion and the activation of store-operated Ca(2+) entry (SOCE) and NFAT translocation from cytosol to nucleus. The sequence is that of EF-hand domain-containing family member B from Mus musculus (Mouse).